We begin with the raw amino-acid sequence, 303 residues long: D-alanine--D-alanine ligase (303 aa).

The ATP-grasp domain occupies 99–293; sequence TYRFLKDIVE…FEELVEIILK (195 aa). 125-176 provides a ligand contact to ATP; that stretch reads GYPCVVKPRREGSSIGVFICESDEEFQHALKEDLPRYGSVIVQKYIPGREMT. Positions 248, 260, and 262 each coordinate Mg(2+).

This sequence belongs to the D-alanine--D-alanine ligase family. The cofactor is Mg(2+). It depends on Mn(2+) as a cofactor.

It localises to the cytoplasm. The enzyme catalyses 2 D-alanine + ATP = D-alanyl-D-alanine + ADP + phosphate + H(+). It participates in cell wall biogenesis; peptidoglycan biosynthesis. Its function is as follows. Cell wall formation. The sequence is that of D-alanine--D-alanine ligase from Thermotoga petrophila (strain ATCC BAA-488 / DSM 13995 / JCM 10881 / RKU-1).